We begin with the raw amino-acid sequence, 1162 residues long: Spike glycoprotein (1162 aa).

Residues 1 to 18 (MLVTPLLLVTLLCALCSA) form the signal peptide. Topologically, residues 19-1095 (VLYDSSSYVY…LKTYIKWPWY (1077 aa)) are extracellular. Residues N51, N77, N103, N144, N163, N178, N212, N237, N247, N264, N276, N306, N425, N447, N513, N530, N579, N591, N669, N676, and N714 are each glycosylated (N-linked (GlcNAc...) asparagine; by host). Residues 769-874 (IPFATQLQAR…QVDRLITGRL (106 aa)) form a heptad repeat 1 (HR1) region. Residues 822–866 (QDVVSKQSAILTETMASLNKNFGAISSVIQEIYQQFDAIQANAQV) are a coiled coil. N-linked (GlcNAc...) asparagine; by host glycosylation is found at N947, N960, N979, N1014, N1038, N1051, and N1074. The tract at residues 1024–1105 (NDDFDFNDEL…VWLAIAFATI (82 aa)) is heptad repeat 2 (HR2). The stretch at 1055-1083 (PILDIDSEIDRIQGVIQGLNDSLIDLEKL) forms a coiled coil. The helical transmembrane segment at 1096 to 1116 (VWLAIAFATIIFILILGWVFF) threads the bilayer. The Cytoplasmic portion of the chain corresponds to 1117–1162 (MTGCCGCCCGCFGIMPLMSKCGKKSSYYTTFDNDVVTEQYRPKKSV). The Di-lysine motif signature appears at 1159–1162 (KKSV).

It belongs to the gammacoronaviruses spike protein family. As to quaternary structure, homotrimer; each monomer consists of a S1 and a S2 subunit. The resulting peplomers protrude from the virus surface as spikes. In terms of processing, specific enzymatic cleavages in vivo yield mature proteins. The precursor is processed into S1 and S2 by host cell furin or furin-like protease to yield the mature S1 and S2 proteins. The cleavage site between S1 and S2 requires the optimal sequence [KR]-X-[KR]-R. Additionally, a second cleavage leads to the release of a fusion peptide after viral attachment to host cell receptor.

The protein localises to the virion membrane. It is found in the host endoplasmic reticulum-Golgi intermediate compartment membrane. In terms of biological role, attaches the virion to the host cell membrane by interacting with sialic acids, initiating the infection. Mediates fusion of the virion and cellular membranes by acting as a class I viral fusion protein. Under the current model, the protein has at least 3 conformational states: pre-fusion native state, pre-hairpin intermediate state, and post-fusion hairpin state. During viral and target cell membrane fusion, the coiled coil regions (heptad repeats) assume a trimer-of-hairpins structure, positioning the fusion peptide in close proximity to the C-terminal region of the ectodomain. The formation of this structure appears to drive apposition and subsequent fusion of viral and target cell membranes. Its function is as follows. Acts as a viral fusion peptide after S2 cleavage occurring upon virus endocytosis. The protein is Spike glycoprotein of Avian infectious bronchitis virus (strain Beaudette) (IBV).